The following is a 308-amino-acid chain: Isoaspartyl peptidase/L-asparaginase (308 aa).

The residue at position 1 (methionine 1) is an N-acetylmethionine. Threonine 168 functions as the Nucleophile in the catalytic mechanism. Substrate is bound by residues arginine 196–aspartate 199 and threonine 219–glycine 222.

This sequence belongs to the Ntn-hydrolase family. In terms of assembly, heterodimer of an alpha and beta chain produced by autocleavage. This heterodimer may then dimerize in turn, giving rise to a heterotetramer. In terms of processing, cleaved into an alpha and beta chain by autocatalysis; this activates the enzyme. The N-terminal residue of the beta subunit is responsible for the nucleophile hydrolase activity.

It localises to the cytoplasm. The catalysed reaction is L-asparagine + H2O = L-aspartate + NH4(+). It catalyses the reaction Cleavage of a beta-linked Asp residue from the N-terminus of a polypeptide.. Functionally, has both L-asparaginase and beta-aspartyl peptidase activity. May be involved in the production of L-aspartate, which can act as an excitatory neurotransmitter in some brain regions. Is highly active with L-Asp beta-methyl ester. Besides, has catalytic activity toward beta-aspartyl dipeptides and their methyl esters, including beta-L-Asp-L-Phe, beta-L-Asp-L-Phe methyl ester (aspartame), beta-L-Asp-L-Ala, beta-L-Asp-L-Leu and beta-L-Asp-L-Lys. Does not have aspartylglucosaminidase activity and is inactive toward GlcNAc-L-Asn. Likewise, has no activity toward glutamine. The protein is Isoaspartyl peptidase/L-asparaginase (ASRGL1) of Macaca fascicularis (Crab-eating macaque).